We begin with the raw amino-acid sequence, 160 residues long: 6,7-dimethyl-8-ribityllumazine synthase (160 aa).

5-amino-6-(D-ribitylamino)uracil-binding positions include F23, S61 to E63, and A85 to I87. Residue D90–T91 coordinates (2S)-2-hydroxy-3-oxobutyl phosphate. H93 acts as the Proton donor in catalysis. Residue F118 participates in 5-amino-6-(D-ribitylamino)uracil binding. Residue R132 coordinates (2S)-2-hydroxy-3-oxobutyl phosphate.

The protein belongs to the DMRL synthase family.

The enzyme catalyses (2S)-2-hydroxy-3-oxobutyl phosphate + 5-amino-6-(D-ribitylamino)uracil = 6,7-dimethyl-8-(1-D-ribityl)lumazine + phosphate + 2 H2O + H(+). Its pathway is cofactor biosynthesis; riboflavin biosynthesis; riboflavin from 2-hydroxy-3-oxobutyl phosphate and 5-amino-6-(D-ribitylamino)uracil: step 1/2. In terms of biological role, catalyzes the formation of 6,7-dimethyl-8-ribityllumazine by condensation of 5-amino-6-(D-ribitylamino)uracil with 3,4-dihydroxy-2-butanone 4-phosphate. This is the penultimate step in the biosynthesis of riboflavin. The sequence is that of 6,7-dimethyl-8-ribityllumazine synthase from Synechococcus sp. (strain CC9311).